We begin with the raw amino-acid sequence, 212 residues long: N-(5'-phosphoribosyl)anthranilate isomerase (212 aa).

Belongs to the TrpF family.

It carries out the reaction N-(5-phospho-beta-D-ribosyl)anthranilate = 1-(2-carboxyphenylamino)-1-deoxy-D-ribulose 5-phosphate. It participates in amino-acid biosynthesis; L-tryptophan biosynthesis; L-tryptophan from chorismate: step 3/5. This is N-(5'-phosphoribosyl)anthranilate isomerase (trpF) from Cereibacter sphaeroides (strain ATCC 17023 / DSM 158 / JCM 6121 / CCUG 31486 / LMG 2827 / NBRC 12203 / NCIMB 8253 / ATH 2.4.1.) (Rhodobacter sphaeroides).